The sequence spans 66 residues: Large ribosomal subunit protein uL29 (66 aa).

It belongs to the universal ribosomal protein uL29 family.

The protein is Large ribosomal subunit protein uL29 of Thermotoga sp. (strain RQ2).